Here is a 607-residue protein sequence, read N- to C-terminus: Matrix metalloproteinase-16 (607 aa).

Positions 1-31 (MILLTFSTGRRLDFVHHSGVFFLQTLLWILC) are cleaved as a signal peptide. The propeptide occupies 32 to 119 (ATVCGTEQYF…SSKFHIRRKR (88 aa)). N-linked (GlcNAc...) asparagine glycosylation occurs at Asn83. The Cysteine switch signature appears at 99–106 (PRCGVPDQ). Cys101 provides a ligand contact to Zn(2+). Residues 120-564 (YALTGQKWQH…LDNTASTVKA (445 aa)) lie on the Extracellular side of the membrane. Residue Asp183 participates in Ca(2+) binding. His193 and Asp195 together coordinate Zn(2+). 4 residues coordinate Ca(2+): Asp200, Gly201, Gly203, and Phe205. A Zn(2+)-binding site is contributed by His208. Gly215, Gly217, and Asp219 together coordinate Ca(2+). A Zn(2+)-binding site is contributed by His221. Ca(2+) is bound by residues Asp223 and Glu226. Position 246 (His246) interacts with Zn(2+). Glu247 is a catalytic residue. Zn(2+)-binding residues include His250 and His256. Residues 281-340 (DDLQGIQKIYGPPDKIPPPTRPLPTVPPHRSIPPADPRKNDRPKPPRPPTGRPSYPGAKP) form a disordered region. Pro residues predominate over residues 294 to 315 (DKIPPPTRPLPTVPPHRSIPPA). Hemopexin repeat units follow at residues 340 to 388 (PNIC…WRGL), 389 to 434 (PPSI…GSGI), 436 to 484 (PHGI…KGIP), and 485 to 532 (ESPQ…FMGC). Cys343 and Cys532 form a disulfide bridge. A helical membrane pass occupies residues 565-585 (IAIVIPCILALCLLVLVYTVF). At 586 to 607 (QFKRKGTPRHILYCKRSMQEWV) the chain is on the cytoplasmic side.

Belongs to the peptidase M10A family. In terms of assembly, interacts with CSPG4 through CSPG4 chondroitin sulfate glycosaminoglycan. It depends on Zn(2+) as a cofactor. Requires Ca(2+) as cofactor. In terms of processing, the precursor is cleaved by a furin endopeptidase. Expressed in heart, brain, placenta, ovary and small intestine. Isoform Short is found in the ovary.

The protein resides in the cell membrane. It is found in the secreted. The protein localises to the extracellular space. It localises to the extracellular matrix. Its subcellular location is the cell surface. TIMP-2 shows little inhibitory activity compared to TIMP-1. TIMP-1 seems to have less binding affinity than TIMP-2 for the short isoform. Endopeptidase that degrades various components of the extracellular matrix, such as collagen type III and fibronectin. Activates progelatinase A. Involved in the matrix remodeling of blood vessels. Isoform short cleaves fibronectin and also collagen type III, but at lower rate. It has no effect on type I, II, IV and V collagen. However, upon interaction with CSPG4, it may be involved in degradation and invasion of type I collagen by melanoma cells. The chain is Matrix metalloproteinase-16 from Homo sapiens (Human).